A 624-amino-acid polypeptide reads, in one-letter code: Alpha-amylase 1 (624 aa).

Residues Met1–Arg28 form the signal peptide. Residues Glu40–Ser133 form the CBM21 domain. Cys177 and Cys185 are disulfide-bonded. Residue Trp230 participates in substrate binding. Asn268 contributes to the Ca(2+) binding site. His269 lines the substrate pocket. A disulfide bond links Cys297 and Cys311. N-linked (GlcNAc...) asparagine glycosylation occurs at Asn304. Positions 309 and 322 each coordinate Ca(2+). The N-linked (GlcNAc...) asparagine glycan is linked to Asn344. Arg351 is a substrate binding site. Ca(2+) is bound by residues Asp353, His357, and Glu377. Residue Asp353 is the Nucleophile of the active site. Substrate is bound at residue Lys356–His357. The active-site Proton donor is Glu377. Gly381 lines the substrate pocket. A disulfide bridge links Cys387 with Cys430. Residues Asp444 and Arg491 each coordinate substrate. Residues Cys587 and Cys622 are joined by a disulfide bond.

Belongs to the glycosyl hydrolase 13 family. Ca(2+) is required as a cofactor.

It is found in the secreted. It carries out the reaction Endohydrolysis of (1-&gt;4)-alpha-D-glucosidic linkages in polysaccharides containing three or more (1-&gt;4)-alpha-linked D-glucose units.. The chain is Alpha-amylase 1 (LKA1) from Lipomyces kononenkoae (Yeast).